The sequence spans 51 residues: uncharacterized protein (51 aa).

Transmembrane regions (helical) follow at residues Leu-6 to Asp-26 and Ser-28 to Leu-48.

It localises to the host membrane. This is an uncharacterized protein from Enterobacteria phage T4 (Bacteriophage T4).